A 589-amino-acid polypeptide reads, in one-letter code: Protein PAF1 homolog (589 aa).

Residues 1-54 (MASYRPPYPPLPQPPSQNSLAPPPPPPSLPPPVPPPPPSHQPYSYPPPPPPPPH) are compositionally biased toward pro residues. 2 disordered regions span residues 1–180 (MASY…PLLT) and 542–589 (GVYS…DYSE). The span at 55-65 (AYYQQGPHYPQ) shows a compositional bias: low complexity. Pro residues predominate over residues 71–87 (APPPPPPPSAPPPLVPD). Over residues 88 to 116 (PPRHQGPNDHEKGASKQVGRRERAKPDPS) the composition is skewed to basic and acidic residues. A compositionally biased stretch (basic residues) spans 117–127 (KHHHRSHLPHS). Residues 126–159 (HSKKIETEEERRLRKKRELEKQRQDEKHRQQMKN) adopt a coiled-coil conformation. Residues 128 to 154 (KKIETEEERRLRKKRELEKQRQDEKHR) are compositionally biased toward basic and acidic residues.

Belongs to the PAF1 family. In terms of assembly, component of the nuclear PAF1 complex (PAF1C), which consists of VIP2/ELF7/PAF1, VIP3/SKI8/WDR61, VIP4/LEO1, VIP5/RTF1, VIP6/ELF8/CTR9 and CDC73. As to expression, expressed in roots, leaves and shoot apex.

Its subcellular location is the nucleus. Component of the PAF1 complex (PAF1C) which is involved in histone modifications such as methylation on histone H3 'Lys-4' (H3K4me3). Involved in regulation of flowering time. Required for the expression of the flowering repressors and MAD-box genes FLC, AGL27/FLM and AGL31/MAF2. Required for histone H3 trimethylation on 'Lys-4' H3K4me3 at the FLC and AGL27/FLM loci. Involved in the control of seed dormancy and germination. The sequence is that of Protein PAF1 homolog from Arabidopsis thaliana (Mouse-ear cress).